The sequence spans 481 residues: Tripartite motif-containing protein 10 (481 aa).

An RING-type zinc finger spans residues 16–61 (CPICQGTLREPVTIDCGHNFCRACLTRYCEIPGPDLEESPTCPLCK). The segment at 94–135 (GEEDVCQEHGEKIYFFCEDDEMQLCVVCREAGEHATHTMRFL) adopts a B box-type zinc-finger fold. Cys-99, His-102, Cys-121, and His-127 together coordinate Zn(2+). The stretch at 150–177 (LKCLRKEREEIQEIQSRENKRMQVLLTQ) forms a coiled coil. In terms of domain architecture, B30.2/SPRY spans 292-481 (REMKMFLEKL…GRGSSFSLSS (190 aa)).

It belongs to the TRIM/RBCC family. Interacts with IFNAR1; this interaction prevents association of IFNAR1 with TYK2.

It is found in the cytoplasm. Its function is as follows. E3 ligase that plays an essential role in the differentiation and survival of terminal erythroid cells. May directly bind to PTEN and promote its ubiquitination, resulting in its proteasomal degradation and activation of hypertrophic signaling. In addition, plays a role in immune response regulation by repressing the phosphorylation of STAT1 and STAT2 in the interferon/JAK/STAT signaling pathway independent of its E3 ligase activity. Mechanistically, interacts with the intracellular domain of IFNAR1 and thereby inhibits the association between TYK2 and IFNAR1. The polypeptide is Tripartite motif-containing protein 10 (TRIM10) (Homo sapiens (Human)).